The primary structure comprises 385 residues: 1-deoxy-D-xylulose 5-phosphate reductoisomerase 1 (385 aa).

NADPH-binding residues include Thr11, Gly12, Ser13, Ile14, Asn39, and Asn122. 1-deoxy-D-xylulose 5-phosphate is bound at residue Lys123. Glu124 contacts NADPH. Asp148 is a binding site for Mn(2+). The 1-deoxy-D-xylulose 5-phosphate site is built by Ser149, Glu150, Ser174, and His197. Residue Glu150 participates in Mn(2+) binding. Gly203 serves as a coordination point for NADPH. The 1-deoxy-D-xylulose 5-phosphate site is built by Ser210, Asn215, Lys216, and Glu219. Glu219 serves as a coordination point for Mn(2+).

This sequence belongs to the DXR family. Mg(2+) is required as a cofactor. It depends on Mn(2+) as a cofactor.

It catalyses the reaction 2-C-methyl-D-erythritol 4-phosphate + NADP(+) = 1-deoxy-D-xylulose 5-phosphate + NADPH + H(+). Its pathway is isoprenoid biosynthesis; isopentenyl diphosphate biosynthesis via DXP pathway; isopentenyl diphosphate from 1-deoxy-D-xylulose 5-phosphate: step 1/6. Its function is as follows. Catalyzes the NADPH-dependent rearrangement and reduction of 1-deoxy-D-xylulose-5-phosphate (DXP) to 2-C-methyl-D-erythritol 4-phosphate (MEP). In Bacillus thuringiensis subsp. konkukian (strain 97-27), this protein is 1-deoxy-D-xylulose 5-phosphate reductoisomerase 1.